An 84-amino-acid chain; its full sequence is Gomesin-like peptide (84 aa).

A signal peptide spans methionine 1–alanine 23. Glutamine 24 carries the pyrrolidone carboxylic acid modification. 2 disulfides stabilise this stretch: cysteine 25–cysteine 38 and cysteine 29–cysteine 34. Position 41 is an arginine amide (arginine 41). Residues glycine 42–arginine 84 constitute a propeptide that is removed on maturation.

In terms of tissue distribution, expressed by the venom gland.

The protein resides in the secreted. Functionally, antibacterial peptide. The protein is Gomesin-like peptide of Hadronyche infensa (Fraser island funnel-web spider).